The following is a 66-amino-acid chain: Sodium channel neurotoxin MeuNaTxalpha-7 (66 aa).

Positions 2–64 constitute an LCN-type CS-alpha/beta domain; the sequence is RDGYIADDKN…VPIKVSGKCN (63 aa). Intrachain disulfides connect Cys12–Cys63, Cys16–Cys36, Cys22–Cys46, and Cys26–Cys48. Asn64 is modified (asparagine amide).

The protein belongs to the long (4 C-C) scorpion toxin superfamily. Sodium channel inhibitor family. Alpha subfamily. Expressed by the venom gland.

Its subcellular location is the secreted. Alpha toxins bind voltage-independently at site-3 of sodium channels (Nav) and inhibit the inactivation of the activated channels, thereby blocking neuronal transmission. This Mesobuthus eupeus (Lesser Asian scorpion) protein is Sodium channel neurotoxin MeuNaTxalpha-7.